Here is a 346-residue protein sequence, read N- to C-terminus: Cell division protein ZipA (346 aa).

Residues 1 to 6 are Periplasmic-facing; the sequence is MEDLQL. A helical transmembrane segment spans residues 7 to 27; that stretch reads VLFVLGAIAIVAVLVHGFWSI. At 28-346 the chain is on the cytoplasmic side; it reads RRQQPKSLKD…DYLHRIRANA (319 aa). Disordered stretches follow at residues 76–103 and 121–145; these read ANEA…QPVE and QPDF…RQEP.

This sequence belongs to the ZipA family. In terms of assembly, interacts with FtsZ via their C-terminal domains.

Its subcellular location is the cell inner membrane. Essential cell division protein that stabilizes the FtsZ protofilaments by cross-linking them and that serves as a cytoplasmic membrane anchor for the Z ring. Also required for the recruitment to the septal ring of downstream cell division proteins. The chain is Cell division protein ZipA from Shewanella sp. (strain MR-4).